We begin with the raw amino-acid sequence, 384 residues long: tRNA-specific 2-thiouridylase MnmA (384 aa).

ATP contacts are provided by residues 13–20 (GLSGGVDS) and Met-39. The segment at 99-101 (NPD) is interaction with target base in tRNA. The active-site Nucleophile is Cys-104. A disulfide bridge connects residues Cys-104 and Cys-215. Residue Gly-128 coordinates ATP. An interaction with tRNA region spans residues 165–167 (KDQ). The active-site Cysteine persulfide intermediate is the Cys-215. Residues 333-334 (RY) form an interaction with tRNA region.

Belongs to the MnmA/TRMU family.

It localises to the cytoplasm. The enzyme catalyses S-sulfanyl-L-cysteinyl-[protein] + uridine(34) in tRNA + AH2 + ATP = 2-thiouridine(34) in tRNA + L-cysteinyl-[protein] + A + AMP + diphosphate + H(+). Its function is as follows. Catalyzes the 2-thiolation of uridine at the wobble position (U34) of tRNA, leading to the formation of s(2)U34. The chain is tRNA-specific 2-thiouridylase MnmA from Albidiferax ferrireducens (strain ATCC BAA-621 / DSM 15236 / T118) (Rhodoferax ferrireducens).